We begin with the raw amino-acid sequence, 380 residues long: Growth-regulating factor 4 (380 aa).

The tract at residues 1–21 (MDLQLKQWRSQQQNESEEQGS) is disordered. Residues 82–117 (FFSWAQWQELELQALIYRYMLAGASVPQELLLPIKK) enclose the QLQ domain. The WRC domain maps to 151–195 (DPEPGRCKRTDGKKWRCSRDVVAGHKYCDRHIHRGRNRSRKPVET). 2 consecutive short sequence motifs (bipartite nuclear localization signal) follow at residues 156–166 (RCKRTDGKKWR) and 184–191 (RGRNRSRK). Disordered stretches follow at residues 222–270 (NNNH…GRSD) and 284–330 (RSSD…NMRN). Composition is skewed to low complexity over residues 228–245 (SSGS…SCSS) and 285–296 (SSDSTSSPMSSS). Polar residues predominate over residues 297-320 (TCHLSISMPGNNTSSDVSLKLSTG).

Belongs to the GRF family. In terms of tissue distribution, strongly expressed in actively growing and developing tissues, such as roots, upper stems, and shoot tips containing the shoot apical meristem (SAM) and flower buds. Also expressed in mature flowers, but weakly expressed in mature stems and leaves.

The protein resides in the nucleus. Its function is as follows. Transcription activator that plays a role in the regulation of cell expansion in leaf and cotyledons tissues. Component of a network formed by miR396, the GRFs and their interacting factors (GIFs) acting in the regulation of meristem function, at least partially through the control of cell proliferation. This Arabidopsis thaliana (Mouse-ear cress) protein is Growth-regulating factor 4 (GRF4).